The chain runs to 184 residues: SsrA-binding protein (184 aa).

Polar residues predominate over residues 1 to 11; the sequence is MAAKKSTPTDS. The interval 1 to 31 is disordered; that stretch reads MAAKKSTPTDSGKSKGKKNKAQKGAGQKGAG.

Belongs to the SmpB family.

It is found in the cytoplasm. In terms of biological role, required for rescue of stalled ribosomes mediated by trans-translation. Binds to transfer-messenger RNA (tmRNA), required for stable association of tmRNA with ribosomes. tmRNA and SmpB together mimic tRNA shape, replacing the anticodon stem-loop with SmpB. tmRNA is encoded by the ssrA gene; the 2 termini fold to resemble tRNA(Ala) and it encodes a 'tag peptide', a short internal open reading frame. During trans-translation Ala-aminoacylated tmRNA acts like a tRNA, entering the A-site of stalled ribosomes, displacing the stalled mRNA. The ribosome then switches to translate the ORF on the tmRNA; the nascent peptide is terminated with the 'tag peptide' encoded by the tmRNA and targeted for degradation. The ribosome is freed to recommence translation, which seems to be the essential function of trans-translation. The sequence is that of SsrA-binding protein from Corynebacterium jeikeium (strain K411).